The primary structure comprises 161 residues: Abscisic acid receptor PYL11 (161 aa).

The START-like stretch occupies residues 3–154 (TSQKYHTCGS…NLKSLAKLSE (152 aa)). Abscisate is bound by residues lysine 39, 68-73 (AEFSRE), 95-101 (RLVNYRS), and glutamate 119. Residues 64 to 68 (SGLPA) carry the Gate loop motif. A Latch loop motif is present at residues 94–96 (HRL).

This sequence belongs to the PYR/PYL/RCAR abscisic acid intracellular receptor family. Homodimer. Binds ABA on one subunit only. Interacts with PP2Cs. Binds to CARs protein in an ABA-independent manner, both at the plasma membrane and in the nucleus. Interacts with I-2 and TOPP1.

It is found in the cytoplasm. The protein resides in the nucleus. Its subcellular location is the cell membrane. Its function is as follows. Receptor for abscisic acid (ABA) required for ABA-mediated responses such as stomatal closure and germination inhibition. Inhibits the activity of group-A protein phosphatases type 2C (PP2Cs) when activated by ABA. Suppresses the phosphatase activity of TOPP1 in a dose-dependent manner in vitro. The polypeptide is Abscisic acid receptor PYL11 (PYL11) (Arabidopsis thaliana (Mouse-ear cress)).